Consider the following 439-residue polypeptide: Putative porin QuiX (439 aa).

Residues 1-22 (MRHFFKLGLVSAAVLGSQMTLA) form the signal peptide.

This sequence belongs to the OprB family.

Its subcellular location is the cell outer membrane. In terms of biological role, could be involved in the transport of quinate or shikimate. The sequence is that of Putative porin QuiX (quiX) from Acinetobacter baylyi (strain ATCC 33305 / BD413 / ADP1).